A 403-amino-acid chain; its full sequence is Probable eukaryotic initiation factor 4A (403 aa).

The disordered stretch occupies residues 1–29 (MSQQDRVAPQDQDSFLDDQPGVRPIPSFD). The Q motif signature appears at 26–54 (PSFDDMPLHQNLLRGIYSYGFEKPSSIQQ). A Helicase ATP-binding domain is found at 57–230 (IAPFTRGGDI…KKFMRDPVRI (174 aa)). 70–77 (AQSGTGKT) contacts ATP. The DEAD box signature appears at 178-181 (DEAD). The 161-residue stretch at 241-401 (GIKQFFIAVE…ELPVDFAAYL (161 aa)) folds into the Helicase C-terminal domain.

This sequence belongs to the DEAD box helicase family. eIF4A subfamily. In terms of assembly, eIF4F is a multi-subunit complex, the composition of which varies with external and internal environmental conditions. It is composed of at least EIF4A, EIF4E and EIF4G.

The catalysed reaction is ATP + H2O = ADP + phosphate + H(+). ATP-dependent RNA helicase which is a subunit of the eIF4F complex involved in cap recognition and is required for mRNA binding to ribosome. In the current model of translation initiation, eIF4A unwinds RNA secondary structures in the 5'-UTR of mRNAs which is necessary to allow efficient binding of the small ribosomal subunit, and subsequent scanning for the initiator codon. This Leishmania braziliensis protein is Probable eukaryotic initiation factor 4A.